The sequence spans 146 residues: Large ribosomal subunit protein bL21 (146 aa).

A disordered region spans residues 96–146 (KKKTRRKMGHRQELTRVMVKSISITNSTPKTSSKTEVKKKSTSPKASNPEN).

Belongs to the bacterial ribosomal protein bL21 family. As to quaternary structure, part of the 50S ribosomal subunit. Contacts protein L20.

Its function is as follows. This protein binds to 23S rRNA in the presence of protein L20. This Prochlorococcus marinus subsp. pastoris (strain CCMP1986 / NIES-2087 / MED4) protein is Large ribosomal subunit protein bL21.